Consider the following 439-residue polypeptide: High-energy light unresponsive protein 1 (439 aa).

The Cytoplasmic portion of the chain corresponds to 1–67 (MPPPSSHSNI…LGLNQSIRPN (67 aa)). A helical transmembrane segment spans residues 68–88 (NSLLFRIYSWLVFCLLLFTTL). Residues 89–114 (RKFNQVGVRPNGTRENLQEFFANPRS) lie on the Extracellular side of the membrane. The helical transmembrane segment at 115–135 (MITLCNALIMLSGLLASLQLY) threads the bilayer. Residues 136–164 (TLGAKRLKPLKILCQFSLNVRTKQAERRQ) lie on the Cytoplasmic side of the membrane. The helical transmembrane segment at 165–185 (FMINTFLAVFSGLLALTMAAT) threads the bilayer. The Extracellular segment spans residues 186 to 211 (YAMSKWGYILYIVGTPNLDTETIFCV). The chain crosses the membrane as a helical span at residues 212–232 (LLDSYALFVSRAAISALAILF). Over 233–290 (YQHCSVIRRSIKHLINEMVPAEQDECPLPESSLQKIHDCQISYQRIFNGKAVIEEYYS) the chain is Cytoplasmic. Residues 291-311 (FVLFYSYGVCIPIFCFLMFVG) form a helical membrane-spanning segment. Topologically, residues 312 to 324 (MSAQSICWSEVVS) are extracellular. Residues 325 to 345 (IVIWIVNAILVLLLFSLPAFM) form a helical membrane-spanning segment. Topologically, residues 346 to 402 (INEDGDRLVASSFRMYHETFHEERDLTVLSQMTFFTFQIHSTKLTLSACNYFYMDRS) are cytoplasmic. A helical transmembrane segment spans residues 403 to 423 (ILLSLFSAILTYFLILWEFDI). At 424-439 (KNNQSLQNIANHTIHT) the chain is on the extracellular side.

This sequence belongs to the insect chemoreceptor superfamily. Gustatory receptor (GR) family. As to expression, expressed in the AVG and PVT neurons of the tail.

It is found in the cell membrane. Photoreceptor for short wavelength (UV) light that mediates UV-light-induced avoidance behavior. Directly senses and absorbs both UV-A and UV-B light with very high efficiency. Absorption of UV-B but not UV-A light shows resistance to photobleaching. In contrast to other photoreceptors, does not use a prosthetic chromophore to capture photons and only depends on its protein conformation. Might have a role in response to white light exposure. This Caenorhabditis elegans protein is High-energy light unresponsive protein 1.